A 152-amino-acid polypeptide reads, in one-letter code: Cytochrome c-type biogenesis protein CcmE (152 aa).

The Cytoplasmic portion of the chain corresponds to M1 to R9. A helical; Signal-anchor for type II membrane protein transmembrane segment spans residues I10 to A30. Topologically, residues L31–S152 are periplasmic. H123 and Y127 together coordinate heme.

It belongs to the CcmE/CycJ family.

The protein localises to the cell inner membrane. Its function is as follows. Heme chaperone required for the biogenesis of c-type cytochromes. Transiently binds heme delivered by CcmC and transfers the heme to apo-cytochromes in a process facilitated by CcmF and CcmH. The chain is Cytochrome c-type biogenesis protein CcmE from Jannaschia sp. (strain CCS1).